The chain runs to 433 residues: uncharacterized protein (433 aa).

A signal peptide spans 1–26 (MTRRAEFEMGLFVILQSMFLISLCSS). Residues Asn59, Asn72, Asn125, Asn159, Asn210, Asn275, Asn282, and Asn323 are each glycosylated (N-linked (GlcNAc...) asparagine). Ala405 is lipidated: GPI-anchor amidated alanine. The propeptide at 406–433 (SSQPRLHDEGVTRLVIFVLSMLLVMLLS) is removed in mature form.

The protein localises to the cell membrane. This is an uncharacterized protein from Arabidopsis thaliana (Mouse-ear cress).